The following is a 1077-amino-acid chain: Receptor-type guanylate cyclase daf-11 (1077 aa).

4 N-linked (GlcNAc...) asparagine glycosylation sites follow: Asn14, Asn112, Asn149, and Asn311. The helical transmembrane segment at 335 to 355 threads the bilayer; it reads TGVIIAIAVIMGVLLMFIIIL. A Protein kinase domain is found at 355–695; it reads LTTIRKCCNG…LARKIIDTVL (341 aa). The Cytoplasmic portion of the chain corresponds to 356–1077; it reads TTIRKCCNGS…DSQASTIPDN (722 aa). One can recognise a Guanylate cyclase domain in the interval 765–895; sequence TILYSDIVGF…EAVILASKME (131 aa). Asp770, Ile771, and Asp814 together coordinate Mg(2+). Residues 983 to 1034 are a coiled coil; that stretch reads KDKMTLAKEKVIAERKNEEERLQRQQTLQEALEEHEEEIEMNEVLVDEDEGE. The disordered stretch occupies residues 1048 to 1077; it reads TQMEELEDEPAGRTIGHGRLDSQASTIPDN.

Belongs to the adenylyl cyclase class-4/guanylyl cyclase family. Expressed in sensory neurons including ASI, ASJ, ASK, AWB and AWC. Expressed in ASJ neurons in the dauer stage.

It is found in the cell membrane. It localises to the cell projection. Its subcellular location is the dendrite. The protein localises to the cilium. The protein resides in the perikaryon. The catalysed reaction is GTP = 3',5'-cyclic GMP + diphosphate. Guanylate cyclase involved in the production of the second messenger cGMP. In addition, regulates cGMP levels by controlling the transcription of 3',5'-cyclic phosphodiesterase pde-1 and pde-5 mRNAs. Involved in the olfactory, light and pheromone sensing pathways. Part of the chemosensory mechanism of the ASJ sensory neuron that controls dauer formation and dauer recovery. Promotes the calcium flux in ASJ sensory neurons in response to onset and removal of a nitric oxide (NO) stimulus and is thereby required for the behavioral avoidance response to NO-producing organisms like P.aeruginosa. In ASI and ASJ sensory neurons, controls dauer formation and behavioral response to P.aeruginosa by up-regulating the transcription of daf-7, a member of the TGF-beta family. Required for the chemotaxis responses to non-volatile and volatile attractants mediated by the sensory neurons ASE and AWC respectively. Required in ASJ neurons for phototransduction downstream of G protein coupled-photoreceptor lite-1. Plays a role in the development of ASJ sensory neuron axons during late larval stages and in the maintenance of normal axon morphology in adults. Required to maintain the expression of putative olfactory receptor str-2 in one of the two AWC neurons in adults. Regulates, via the production of cGMP, lifespan (in some environmental conditions), sensitivity to oxidative stress and entry into quiescence triggered by satiety. In AWB and AWC sensory neurons, mediates the recognition of food odors which subsequently allows for the detection of preferred food sources. The protein is Receptor-type guanylate cyclase daf-11 of Caenorhabditis elegans.